The following is a 114-amino-acid chain: Cytochrome c oxidase assembly protein cox16, mitochondrial (114 aa).

A helical transmembrane segment spans residues 29-49 (PFLLFGLPFMSVIVAGSFILT).

The protein belongs to the COX16 family.

Its subcellular location is the mitochondrion inner membrane. In terms of biological role, required for the assembly of the mitochondrial respiratory chain complex IV (CIV), also known as cytochrome c oxidase. May participate in merging the COX1 and COX2 assembly lines. This chain is Cytochrome c oxidase assembly protein cox16, mitochondrial (cox-9), found in Neurospora crassa (strain ATCC 24698 / 74-OR23-1A / CBS 708.71 / DSM 1257 / FGSC 987).